The following is a 406-amino-acid chain: Tyrosine--tRNA ligase (406 aa).

Tyrosine 35 contacts L-tyrosine. The 'HIGH' region motif lies at 40–49 (PTGPSLHIGH). L-tyrosine contacts are provided by tyrosine 168 and glutamine 172. Residues 228–232 (KMGKS) carry the 'KMSKS' region motif. Lysine 231 lines the ATP pocket. Residues 339 to 405 (IGIIDLFAEA…GKKRFMRIIF (67 aa)) form the S4 RNA-binding domain.

The protein belongs to the class-I aminoacyl-tRNA synthetase family. TyrS type 1 subfamily. In terms of assembly, homodimer.

It localises to the cytoplasm. The catalysed reaction is tRNA(Tyr) + L-tyrosine + ATP = L-tyrosyl-tRNA(Tyr) + AMP + diphosphate + H(+). Functionally, catalyzes the attachment of tyrosine to tRNA(Tyr) in a two-step reaction: tyrosine is first activated by ATP to form Tyr-AMP and then transferred to the acceptor end of tRNA(Tyr). This is Tyrosine--tRNA ligase from Treponema denticola (strain ATCC 35405 / DSM 14222 / CIP 103919 / JCM 8153 / KCTC 15104).